The following is a 36-amino-acid chain: Potassium channel toxin alpha-KTx 16.9 (36 aa).

Disulfide bonds link cysteine 7-cysteine 28, cysteine 13-cysteine 33, and cysteine 17-cysteine 35.

This sequence belongs to the short scorpion toxin superfamily. Potassium channel inhibitor family. Alpha-KTx 16 subfamily. In terms of tissue distribution, expressed by the venom gland.

It is found in the secreted. In terms of biological role, poorly competes with (125)I-kaliotoxin binding on rat brain synaptosome (IC(50)&gt;100 nM). Is a poor Kv1.3/KCNA3 ligand. May have as real target KCa1.1/KCNMA1 channel. Shows weak toxicity on mice. The sequence is that of Potassium channel toxin alpha-KTx 16.9 from Buthus paris (Scorpion).